The sequence spans 533 residues: Tyrosinase (533 aa).

Positions 1 to 18 (MFLAVLYCLLWSFQISDG) are cleaved as a signal peptide. The Lumenal, melanosome segment spans residues 19 to 476 (HFPRACASSK…YLEQASRIWP (458 aa)). Residues N86, N111, and N161 are each glycosylated (N-linked (GlcNAc...) asparagine). Cu cation is bound by residues H180, H202, and H211. Residues N230 and N337 are each glycosylated (N-linked (GlcNAc...) asparagine). Cu cation-binding residues include H363 and H367. N-linked (GlcNAc...) asparagine glycosylation occurs at N371. H390 contributes to the Cu cation binding site. Residues 477–497 (WLLGAALVGAVIAAALSGLSS) form a helical membrane-spanning segment. The Cytoplasmic segment spans residues 498-533 (RLCLQKKKKKKQPQEERQPLLMDKDDYHSLLYQSHL).

It belongs to the tyrosinase family. Forms an OPN3-dependent complex with DCT in response to blue light in melanocytes. The cofactor is Cu(2+). Post-translationally, glycosylated. Expressed in the skin.

The protein localises to the melanosome membrane. Its subcellular location is the melanosome. It carries out the reaction 2 L-dopa + O2 = 2 L-dopaquinone + 2 H2O. The catalysed reaction is L-tyrosine + O2 = L-dopaquinone + H2O. The enzyme catalyses 2 5,6-dihydroxyindole-2-carboxylate + O2 = 2 indole-5,6-quinone-2-carboxylate + 2 H2O. This is a copper-containing oxidase that functions in the formation of pigments such as melanins and other polyphenolic compounds. Catalyzes the initial and rate limiting step in the cascade of reactions leading to melanin production from tyrosine. In addition to hydroxylating tyrosine to DOPA (3,4-dihydroxyphenylalanine), also catalyzes the oxidation of DOPA to DOPA-quinone, and possibly the oxidation of DHI (5,6-dihydroxyindole) to indole-5,6 quinone. In Mus musculus (Mouse), this protein is Tyrosinase (Tyr).